The chain runs to 109 residues: Nucleoid-associated protein Cvib_1034 (109 aa).

The protein belongs to the YbaB/EbfC family. As to quaternary structure, homodimer.

The protein localises to the cytoplasm. The protein resides in the nucleoid. In terms of biological role, binds to DNA and alters its conformation. May be involved in regulation of gene expression, nucleoid organization and DNA protection. The chain is Nucleoid-associated protein Cvib_1034 from Chlorobium phaeovibrioides (strain DSM 265 / 1930) (Prosthecochloris vibrioformis (strain DSM 265)).